Consider the following 25-residue polypeptide: Nicotinic acetylcholine receptor-binding protein Mnn-4 (25 aa).

The cysteines at positions 3 and 20 are disulfide-linked.

This sequence belongs to the three-finger toxin family. Short-chain subfamily. As to expression, expressed by the venom gland.

Its subcellular location is the secreted. Its function is as follows. Binds and may inhibit nicotinic acetylcholine receptors (nAChR). The chain is Nicotinic acetylcholine receptor-binding protein Mnn-4 from Micrurus nigrocinctus (Central American coral snake).